The chain runs to 129 residues: Glycine cleavage system H protein (129 aa).

Residues 24–106 (LLKIGVSEFA…IGEGWLVILK (83 aa)) enclose the Lipoyl-binding domain. N6-lipoyllysine is present on Lys65.

The protein belongs to the GcvH family. The glycine cleavage system is composed of four proteins: P, T, L and H. The cofactor is (R)-lipoate.

Functionally, the glycine cleavage system catalyzes the degradation of glycine. The H protein shuttles the methylamine group of glycine from the P protein to the T protein. This chain is Glycine cleavage system H protein, found in Prochlorococcus marinus (strain AS9601).